We begin with the raw amino-acid sequence, 513 residues long: QWRF motif-containing protein 9 (513 aa).

Polar residues-rich tracts occupy residues 1-26 (MTAA…PSES), 43-55 (GTSS…SPKR), and 65-78 (VTPS…PQST). 3 disordered regions span residues 1-89 (MTAA…RREV), 115-144 (GTLE…LSDQ), and 184-293 (VSNR…LRVR). Residues 79–89 (PRRESLDRREV) show a composition bias toward basic and acidic residues. Polar residues-rich tracts occupy residues 202–211 (ESVSSGSSNG) and 244–262 (VDSS…SPRG). The QWRF motif motif lies at 334-337 (QWQF).

This sequence belongs to the QWRF family.

This chain is QWRF motif-containing protein 9 (QWRF9), found in Arabidopsis thaliana (Mouse-ear cress).